A 359-amino-acid chain; its full sequence is NF-kappa-B inhibitor beta (359 aa).

Ser19 and Ser23 each carry phosphoserine; by RPS6KA1. 3 ANK repeats span residues 57-86 (DGDT…GTEY), 93-122 (LGQT…GVLV), and 126-155 (GGHT…SHPR). Residues 153–194 (HPRDASDTYLTQSQDCTPDTSHAPAAVDSQPNPENEEEPRDE) form a disordered region. The segment covering 160–172 (TYLTQSQDCTPDT) has biased composition (polar residues). ANK repeat units lie at residues 206–235 (DGHT…DLNK), 240–269 (CGRT…DPTA), and 273–302 (GGRT…PEPE). The segment at 298–359 (APEPEDEDDK…KPLPDDPNPA (62 aa)) is disordered. Phosphoserine occurs at positions 313 and 318. Acidic residues predominate over residues 318–331 (SDSDNRDEGDEYDD). The span at 344–359 (PPSPASKPLPDDPNPA) shows a compositional bias: pro residues.

Belongs to the NF-kappa-B inhibitor family. As to quaternary structure, interacts with THRB (via ligand-binding domain). Interacts with RELA and REL. Interacts with COMMD1. Interacts with inhibitor kappa B-interacting Ras-like NKIRAS1 and NKIRAS2. Phosphorylated by RPS6KA1; followed by degradation. Interaction with NKIRAS1 and NKIRAS2 probably prevents phosphorylation. Highly expressed in testis followed by spleen.

It is found in the cytoplasm. The protein localises to the nucleus. Functionally, inhibits NF-kappa-B by complexing with and trapping it in the cytoplasm. However, the unphosphorylated form resynthesized after cell stimulation is able to bind NF-kappa-B allowing its transport to the nucleus and protecting it to further NFKBIA-dependent inactivation. Association with inhibitor kappa B-interacting NKIRAS1 and NKIRAS2 prevent its phosphorylation rendering it more resistant to degradation, explaining its slower degradation. In Mus musculus (Mouse), this protein is NF-kappa-B inhibitor beta (Nfkbib).